Reading from the N-terminus, the 74-residue chain is U3-agatoxin-Ao1d (74 aa).

An N-terminal signal peptide occupies residues 1–20; the sequence is MKAAISLLLLSALLFVVIEA. The propeptide occupies 21–34; it reads ITYEEGKELFQGER. Intrachain disulfides connect C37–C53, C44–C58, C52–C68, and C60–C66. S72 is modified (serine amide).

The protein belongs to the neurotoxin 07 (Beta/delta-agtx) family. 02 (aga-3) subfamily. Expressed by the venom gland.

It is found in the secreted. Insecticidal neurotoxin that induces an irreversible spastic paralysis when injected into insects. Modifies presynaptic voltage-gated sodium channels (Nav), causing them to open at the normal resting potential of the nerve. This leads to spontaneous release of neurotransmitter and repetitive action potentials in motor neurons. The polypeptide is U3-agatoxin-Ao1d (Agelena orientalis (Funnel-web spider)).